A 498-amino-acid chain; its full sequence is Calcium-binding tyrosine phosphorylation-regulated protein (498 aa).

The 38-residue stretch at 12–49 (YGLKTLLEGVSRAILKINPPNITQFAAVYFKELIVFRE) folds into the RIIa domain. 3 disordered regions span residues 74–107 (GTTQEKEPECMEEQVETSVVSQEPTRMEKSTDTE), 135–164 (EETPEAACGGSPKPSTPKAVTPPSSPSPAA), and 247–279 (VDLGPKPKDDEAEPTTASSFPLQDEQDPPAYDQ). Over residues 145–164 (SPKPSTPKAVTPPSSPSPAA) the composition is skewed to low complexity.

In terms of assembly, interacts with FSCB. In terms of processing, phosphorylated on tyrosine residues during in vitro capacitation. Dephosphorylation affects its ability to bind calcium. Expressed in testis.

Its subcellular location is the cytoplasm. The protein localises to the cytoskeleton. It localises to the cell projection. It is found in the cilium. The protein resides in the flagellum. Functionally, may function as a regulator of both motility- and head-associated functions such as capacitation and the acrosome reaction. Binds calcium in vitro. The protein is Calcium-binding tyrosine phosphorylation-regulated protein (CABYR) of Vulpes vulpes (Red fox).